The primary structure comprises 220 residues: Iron-sulfur flavoprotein AF_1436 (220 aa).

Positions 47, 50, 53, and 59 each coordinate [4Fe-4S] cluster.

Belongs to the SsuE family. Isf subfamily. Homodimer. The cofactor is FMN. [4Fe-4S] cluster serves as cofactor.

Redox-active protein probably involved in electron transport. The chain is Iron-sulfur flavoprotein AF_1436 from Archaeoglobus fulgidus (strain ATCC 49558 / DSM 4304 / JCM 9628 / NBRC 100126 / VC-16).